The following is a 338-amino-acid chain: Fructose-1,6-bisphosphatase class 1 (338 aa).

The Mg(2+) site is built by Glu94, Asp116, Leu118, and Asp119. Substrate-binding positions include 119–122 (DGSS), Asn210, and Lys276. Glu282 is a binding site for Mg(2+).

This sequence belongs to the FBPase class 1 family. As to quaternary structure, homotetramer. Mg(2+) serves as cofactor.

It is found in the cytoplasm. It carries out the reaction beta-D-fructose 1,6-bisphosphate + H2O = beta-D-fructose 6-phosphate + phosphate. It participates in carbohydrate biosynthesis; gluconeogenesis. This is Fructose-1,6-bisphosphatase class 1 from Burkholderia thailandensis (strain ATCC 700388 / DSM 13276 / CCUG 48851 / CIP 106301 / E264).